We begin with the raw amino-acid sequence, 414 residues long: Peptide chain release factor subunit 1 (414 aa).

The protein belongs to the eukaryotic release factor 1 family. Heterodimer of two subunits, one of which binds GTP.

The protein localises to the cytoplasm. In terms of biological role, directs the termination of nascent peptide synthesis (translation) in response to the termination codons UAA, UAG and UGA. The protein is Peptide chain release factor subunit 1 of Methanococcoides burtonii (strain DSM 6242 / NBRC 107633 / OCM 468 / ACE-M).